A 151-amino-acid polypeptide reads, in one-letter code: Deoxyuridine 5'-triphosphate nucleotidohydrolase (151 aa).

Residues 70–72 (RSG), N83, 87–89 (LID), and M97 each bind substrate.

This sequence belongs to the dUTPase family. Mg(2+) serves as cofactor.

It catalyses the reaction dUTP + H2O = dUMP + diphosphate + H(+). It functions in the pathway pyrimidine metabolism; dUMP biosynthesis; dUMP from dCTP (dUTP route): step 2/2. Functionally, this enzyme is involved in nucleotide metabolism: it produces dUMP, the immediate precursor of thymidine nucleotides and it decreases the intracellular concentration of dUTP so that uracil cannot be incorporated into DNA. In Sodalis glossinidius (strain morsitans), this protein is Deoxyuridine 5'-triphosphate nucleotidohydrolase.